A 953-amino-acid polypeptide reads, in one-letter code: Leucine-rich repeat receptor protein kinase HPCA1 (953 aa).

A signal peptide spans 1–23; that stretch reads MSSRTGASLLLILFFFQICSVSA. Over 24–558 the chain is Extracellular; sequence LTNGLDASAL…EVSSKSSNKS (535 aa). 6 LRR repeats span residues 64-88, 89-113, 115-137, 138-162, 164-187, and 192-216; these read NDRV…ISFL, SELR…IGNL, KLRN…IGTL, KELI…GLLS, LYWF…TSAP, and LLQT…LFSS. Asparagine 182 is a glycosylation site (N-linked (GlcNAc...) asparagine). A glycan (N-linked (GlcNAc...) asparagine) is linked at asparagine 217. LRR repeat units lie at residues 218–241, 242–265, 266–290, 292–311, 313–337, 339–361, and 362–384; these read MSLI…LSLV, KTLT…LNNL, TNLN…SLTS, YTLD…SWIS, LPSL…FFSP, QLQT…TDVS, and SQLE…ANKV. Residues asparagine 264, asparagine 284, and asparagine 298 are each glycosylated (N-linked (GlcNAc...) asparagine). Asparagine 411 is a glycosylation site (N-linked (GlcNAc...) asparagine). 2 cysteine pairs are disulfide-bonded: cysteine 421-cysteine 424 and cysteine 434-cysteine 436. Asparagine 456, asparagine 459, asparagine 510, and asparagine 523 each carry an N-linked (GlcNAc...) asparagine glycan. A helical transmembrane segment spans residues 559 to 579; it reads ILIGAVVGVVVLLLLLTIAGI. The Cytoplasmic portion of the chain corresponds to 580 to 953; the sequence is YALRQKKRAE…NFPASKLEPQ (374 aa). Phosphoserine occurs at positions 606 and 607. In terms of domain architecture, Protein kinase spans 631-905; sequence FSEANDVGGG…EVVKEIENIM (275 aa). Residues 637–645 and lysine 659 each bind ATP; that span reads VGGGGYGKV. Catalysis depends on aspartate 755, which acts as the Proton acceptor. Residues threonine 786, threonine 789, and threonine 790 each carry the phosphothreonine modification. Residues 912–921 show a composition bias toward polar residues; sequence PNSDSATSSR. Residues 912–953 are disordered; that stretch reads PNSDSATSSRTYEDAIKGSGDPYGSESFQYSGNFPASKLEPQ. Position 942 is a phosphoserine (serine 942).

The protein belongs to the protein kinase superfamily. Ser/Thr protein kinase family. Post-translationally, autophosphorylated at Ser-606, Ser-607, Thr-786, Thr-789, Thr-790 and Ser-942 in response to extracellular hydrogen peroxide. In terms of tissue distribution, widely expressed.

It localises to the cell membrane. The catalysed reaction is L-seryl-[protein] + ATP = O-phospho-L-seryl-[protein] + ADP + H(+). The enzyme catalyses L-threonyl-[protein] + ATP = O-phospho-L-threonyl-[protein] + ADP + H(+). Its activity is regulated as follows. Activated by autophosphorylation on serine and threonine residues in response to extracellular hydrogen peroxide. Functionally, leucine-rich repeat receptor protein kinase that acts as sensor of extracellular hydrogen peroxide. Required for intracellular calcium influx in response to extracellular hydrogen peroxide. Mediates hydrogen peroxide-induced activation of calcium channels in guard cells and is required for stomatal closure. The sequence is that of Leucine-rich repeat receptor protein kinase HPCA1 from Arabidopsis thaliana (Mouse-ear cress).